Reading from the N-terminus, the 766-residue chain is FYVE, RhoGEF and PH domain-containing protein 4 (766 aa).

3 disordered regions span residues 1–20, 46–83, and 134–188; these read MEEI…PSKV, NLNA…DKTQ, and ETAT…ESPL. The actin filament-binding stretch occupies residues 1-150; it reads MEEIKPASAS…SPTTDSCDGN (150 aa). 2 stretches are compositionally biased toward polar residues: residues 58-83 and 145-157; these read LTTT…DKTQ and DSCD…SSYR. The segment covering 167-184 has biased composition (basic and acidic residues); it reads LEERGAETETKVQERENG. Residues 206–393 enclose the DH domain; sequence KLHKIANELL…STAASHSNSA (188 aa). Positions 422-521 constitute a PH 1 domain; sequence ELIKEGQILK…WIKALQETID (100 aa). An FYVE-type zinc finger spans residues 559 to 619; that stretch reads DNEVTMCMKC…VCKDCYQIIS (61 aa). The Zn(2+) site is built by cysteine 565, cysteine 568, cysteine 582, cysteine 585, cysteine 590, cysteine 593, cysteine 611, and cysteine 614. One can recognise a PH 2 domain in the interval 643–740; sequence NSVVCSFLQY…WLKVILLAVT (98 aa). Serine 702 and serine 716 each carry phosphoserine. The interval 742-766 is disordered; sequence ETPGGPNEHPATLDDHPEPKKKSEC. Residues 752 to 766 show a composition bias toward basic and acidic residues; the sequence is ATLDDHPEPKKKSEC.

In terms of assembly, homooligomer. As to expression, expressed in different tissues, including brain, cerebellum, peripheral nerve, skeletal muscle, heart, uterus, placenta and testis.

The protein resides in the cytoplasm. It localises to the cytoskeleton. Its subcellular location is the cell projection. The protein localises to the filopodium. Activates CDC42, a member of the Ras-like family of Rho- and Rac proteins, by exchanging bound GDP for free GTP. Plays a role in regulating the actin cytoskeleton and cell shape. Activates MAPK8. The protein is FYVE, RhoGEF and PH domain-containing protein 4 (FGD4) of Homo sapiens (Human).